Reading from the N-terminus, the 364-residue chain is MVAYALTSMLLSAGALVAAAPSGLDARDGCTFTDAATAIKNKASCSNIVISGMTVPAGTTLDLTGLKSGATVTFQGTTTFGYKEWEGPLISVSGTNIKVVGASGHTIDAAGQKWWDGKGSNGGKTKPKFFYAHSLTTSSISGLNIKNTPVQAFSINGVTGLTLDRITIDNSAGDSAGAHNTDAFDIGSSSGITISNANIKNQDDCVAINSGSDIHVTNCQCSGGHGVSIGSVGGRKDNTVKGVVVSGTTIANSDNGVRIKTISGATGSVSDITYENITLKNIAKYGIVIEQDYLNGGPTGKPTTGVPITGVTLKNVAGSVTGSGTEIYVLCGKGSCSGWNWSGVSITGGKKSSSCLNVPSGASC.

The signal sequence occupies residues 1 to 21; the sequence is MVAYALTSMLLSAGALVAAAP. A propeptide spanning residues 22–27 is cleaved from the precursor; sequence SGLDAR. Cysteine 30 and cysteine 45 are joined by a disulfide. PbH1 repeat units follow at residues 158–188, 189–210, 211–231, 240–261, 269–291, and 303–348; these read VTGL…DIGS, SSGI…AINS, GSDI…SIGS, VKGV…RIKT, VSDI…VIEQ, and TTGV…SITG. Aspartate 203 serves as the catalytic Proton donor. Cysteine 205 and cysteine 221 form a disulfide bridge. The active site involves histidine 225. A glycan (N-linked (GlcNAc...) asparagine) is linked at asparagine 276. Cysteine 331 and cysteine 336 form a disulfide bridge. A glycan (N-linked (GlcNAc...) asparagine) is linked at asparagine 340. An intrachain disulfide couples cysteine 355 to cysteine 364.

Belongs to the glycosyl hydrolase 28 family.

The protein localises to the secreted. It catalyses the reaction (1,4-alpha-D-galacturonosyl)n+m + H2O = (1,4-alpha-D-galacturonosyl)n + (1,4-alpha-D-galacturonosyl)m.. Involved in maceration and soft-rotting of plant tissue. Hydrolyzes the 1,4-alpha glycosidic bonds of de-esterified pectate in the smooth region of the plant cell wall. This chain is Polygalacturonase (PGN1), found in Cochliobolus carbonum (Maize leaf spot fungus).